A 597-amino-acid chain; its full sequence is Bile salt-activated lipase (597 aa).

Positions 1–18 are cleaved as a signal peptide; it reads LGASRLGPSPGCLAVASA. An intrachain disulfide couples C82 to C98. N205 is a glycosylation site (N-linked (GlcNAc...) asparagine). S212 serves as the catalytic Acyl-ester intermediate. C264 and C275 are joined by a disulfide. D338 (charge relay system) is an active-site residue. An N-linked (GlcNAc...) asparagine glycan is attached at N379. The active-site Charge relay system is the H453. The tract at residues 553 to 591 is disordered; the sequence is AGASLLPPEDNSQASPVPPADNSGAPTEPSAGDSEVAQM.

It belongs to the type-B carboxylesterase/lipase family. As to quaternary structure, interacts with CLC.

The protein resides in the secreted. The enzyme catalyses a triacylglycerol + H2O = a diacylglycerol + a fatty acid + H(+). The catalysed reaction is 1,2,3-tri-(9Z-octadecenoyl)-glycerol + H2O = di-(9Z)-octadecenoylglycerol + (9Z)-octadecenoate + H(+). It catalyses the reaction 1,2,3-trioctanoylglycerol + H2O = dioctanoylglycerol + octanoate + H(+). It carries out the reaction a sterol ester + H2O = a sterol + a fatty acid + H(+). The enzyme catalyses cholesteryl (9Z-octadecenoate) + H2O = cholesterol + (9Z)-octadecenoate + H(+). The catalysed reaction is an acetyl ester + H2O = an aliphatic alcohol + acetate + H(+). It catalyses the reaction a butanoate ester + H2O = an aliphatic alcohol + butanoate + H(+). It carries out the reaction 9-hexadecanoyloxy-octadecanoate + H2O = 9-hydroxy-octadecanoate + hexadecanoate + H(+). The enzyme catalyses 9-(9Z-octadecenoyloxy)-octadecanoate + H2O = 9-hydroxy-octadecanoate + (9Z)-octadecenoate + H(+). The catalysed reaction is 1-hexadecanoyl-sn-glycero-3-phosphocholine + H2O = sn-glycerol 3-phosphocholine + hexadecanoate + H(+). It catalyses the reaction 12-hexadecanoyloxy-octadecanoate + H2O = 12-hydroxyoctadecanoate + hexadecanoate + H(+). It carries out the reaction 12-(9Z-octadecenoyloxy)-octadecanoate + H2O = 12-hydroxyoctadecanoate + (9Z)-octadecenoate + H(+). The enzyme catalyses 13-(9Z-octadecenoyloxy)-octadecanoate + H2O = 13-hydroxy-octadecanoate + (9Z)-octadecenoate + H(+). The catalysed reaction is 9-(9Z-hexadecenoyloxy)-octadecanoate + H2O = (9Z)-hexadecenoate + 9-hydroxy-octadecanoate + H(+). It catalyses the reaction 12-(9Z-hexadecenoyloxy)-octadecanoate + H2O = 12-hydroxyoctadecanoate + (9Z)-hexadecenoate + H(+). It carries out the reaction 13-(9Z-hexadecenoyloxy)-octadecanoate + H2O = 13-hydroxy-octadecanoate + (9Z)-hexadecenoate + H(+). The enzyme catalyses 12-octadecanoyloxy-octadecanoate + H2O = 12-hydroxyoctadecanoate + octadecanoate + H(+). The catalysed reaction is 13-octadecanoyloxy-octadecanoate + H2O = 13-hydroxy-octadecanoate + octadecanoate + H(+). It catalyses the reaction 5-(9Z-hexadecenoyloxy)-octadecanoate + H2O = 5-hydroxy-octadecanoate + (9Z)-hexadecenoate + H(+). It carries out the reaction 9-octadecanoyloxy-octadecanoate + H2O = 9-hydroxy-octadecanoate + octadecanoate + H(+). Activated by bile salts such as sodium taurocholate. Its function is as follows. Catalyzes the hydrolysis of a wide range of substrates including cholesteryl esters, phospholipids, lysophospholipids, di- and tri-acylglycerols, and fatty acid esters of hydroxy fatty acids (FAHFA). Preferentially hydrolyzes FAHFAs with the ester bond further away from the carboxylate. Unsaturated FAHFAs are hydrolyzed more quickly than saturated FAHFAs. Has an essential role in the complete digestion of dietary lipids and their intestinal absorption, along with the absorption of fat-soluble vitamins. The protein is Bile salt-activated lipase (CEL) of Bos taurus (Bovine).